A 46-amino-acid polypeptide reads, in one-letter code: Toxin PhcrTx2 (46 aa).

3 disulfides stabilise this stretch: C4/C40, C6/C32, and C22/C41.

This sequence belongs to the sea anemone type 3 (BDS) potassium channel toxin family.

The protein resides in the secreted. It localises to the nematocyst. In terms of biological role, neurotoxin that induces paralysis (but not death) to U.thayeri crabs. Partially and reversibly inhibits glutamate-evoked peak currents (IC(50)=4.7 uM) but not voltage-gated potassium channel currents in cultured isolated neurons from the land snail H.aspersa. Weakly inhibits voltage-gated potassium peak currents (IC(50)=6.4 uM) and steady-state currents (IC(50)=8.2 uM) in rat dorsal root ganglion (DRG) neurons. Weakly inhibits voltage-gated sodium currents in rat DRG neurons (IC(50)=0.9 uM). In Phymanthus crucifer (Red beaded anemone), this protein is Toxin PhcrTx2.